We begin with the raw amino-acid sequence, 753 residues long: Catalase-peroxidase (753 aa).

Positions 91–243 (WHSAGTYRIG…LGAVQMGLIY (153 aa)) form a cross-link, tryptophyl-tyrosyl-methioninium (Trp-Tyr) (with M-269). The Proton acceptor role is filled by histidine 92. The tryptophyl-tyrosyl-methioninium (Tyr-Met) (with W-91) cross-link spans 243 to 269 (YVNPEGPDGNPDPLAAAHDIRETFARM). Histidine 284 is a heme b binding site.

This sequence belongs to the peroxidase family. Peroxidase/catalase subfamily. In terms of assembly, homodimer or homotetramer. The cofactor is heme b. Formation of the three residue Trp-Tyr-Met cross-link is important for the catalase, but not the peroxidase activity of the enzyme.

The catalysed reaction is H2O2 + AH2 = A + 2 H2O. The enzyme catalyses 2 H2O2 = O2 + 2 H2O. Its function is as follows. Bifunctional enzyme with both catalase and broad-spectrum peroxidase activity. The sequence is that of Catalase-peroxidase from Paraburkholderia xenovorans (strain LB400).